Here is a 485-residue protein sequence, read N- to C-terminus: ATP synthase subunit beta, cyanelle (485 aa).

Residue 162 to 169 (GGAGVGKT) participates in ATP binding.

Belongs to the ATPase alpha/beta chains family. In terms of assembly, F-type ATPases have 2 components, CF(1) - the catalytic core - and CF(0) - the membrane proton channel. CF(1) has five subunits: alpha(3), beta(3), gamma(1), delta(1), epsilon(1). CF(0) has four main subunits: a(1), b(1), b'(1) and c(9-12).

It localises to the plastid. The protein localises to the cyanelle thylakoid membrane. The catalysed reaction is ATP + H2O + 4 H(+)(in) = ADP + phosphate + 5 H(+)(out). Produces ATP from ADP in the presence of a proton gradient across the membrane. The catalytic sites are hosted primarily by the beta subunits. In Cyanophora paradoxa, this protein is ATP synthase subunit beta, cyanelle.